A 224-amino-acid polypeptide reads, in one-letter code: ATP phosphoribosyltransferase (224 aa).

This sequence belongs to the ATP phosphoribosyltransferase family. Short subfamily. As to quaternary structure, heteromultimer composed of HisG and HisZ subunits.

Its subcellular location is the cytoplasm. It carries out the reaction 1-(5-phospho-beta-D-ribosyl)-ATP + diphosphate = 5-phospho-alpha-D-ribose 1-diphosphate + ATP. It functions in the pathway amino-acid biosynthesis; L-histidine biosynthesis; L-histidine from 5-phospho-alpha-D-ribose 1-diphosphate: step 1/9. In terms of biological role, catalyzes the condensation of ATP and 5-phosphoribose 1-diphosphate to form N'-(5'-phosphoribosyl)-ATP (PR-ATP). Has a crucial role in the pathway because the rate of histidine biosynthesis seems to be controlled primarily by regulation of HisG enzymatic activity. This chain is ATP phosphoribosyltransferase, found in Cupriavidus pinatubonensis (strain JMP 134 / LMG 1197) (Cupriavidus necator (strain JMP 134)).